The sequence spans 160 residues: Ribosomal RNA large subunit methyltransferase H (160 aa).

Leu76 and Gly108 together coordinate S-adenosyl-L-methionine.

This sequence belongs to the RNA methyltransferase RlmH family. As to quaternary structure, homodimer.

Its subcellular location is the cytoplasm. The enzyme catalyses pseudouridine(1915) in 23S rRNA + S-adenosyl-L-methionine = N(3)-methylpseudouridine(1915) in 23S rRNA + S-adenosyl-L-homocysteine + H(+). Functionally, specifically methylates the pseudouridine at position 1915 (m3Psi1915) in 23S rRNA. This is Ribosomal RNA large subunit methyltransferase H from Rhodopseudomonas palustris (strain BisB18).